A 201-amino-acid chain; its full sequence is Small ribosomal subunit protein uS4 (201 aa).

The 67-residue stretch at 91–157 folds into the S4 RNA-binding domain; it reads SRLDNVVYRA…VPFQIARETA (67 aa).

The protein belongs to the universal ribosomal protein uS4 family. As to quaternary structure, part of the 30S ribosomal subunit. Contacts protein S5. The interaction surface between S4 and S5 is involved in control of translational fidelity.

Functionally, one of the primary rRNA binding proteins, it binds directly to 16S rRNA where it nucleates assembly of the body of the 30S subunit. Its function is as follows. With S5 and S12 plays an important role in translational accuracy. The chain is Small ribosomal subunit protein uS4 from Mycolicibacterium paratuberculosis (strain ATCC BAA-968 / K-10) (Mycobacterium paratuberculosis).